Here is a 172-residue protein sequence, read N- to C-terminus: Large ribosomal subunit protein uL10 (172 aa).

This sequence belongs to the universal ribosomal protein uL10 family. In terms of assembly, part of the ribosomal stalk of the 50S ribosomal subunit. The N-terminus interacts with L11 and the large rRNA to form the base of the stalk. The C-terminus forms an elongated spine to which L12 dimers bind in a sequential fashion forming a multimeric L10(L12)X complex.

In terms of biological role, forms part of the ribosomal stalk, playing a central role in the interaction of the ribosome with GTP-bound translation factors. The sequence is that of Large ribosomal subunit protein uL10 from Afipia carboxidovorans (strain ATCC 49405 / DSM 1227 / KCTC 32145 / OM5) (Oligotropha carboxidovorans).